The chain runs to 529 residues: Cytochrome P450 monooxygenase CLM2 (529 aa).

A helical membrane pass occupies residues 2 to 19; the sequence is LLIIVVLVGTLIYFLSFH. N-linked (GlcNAc...) asparagine glycans are attached at residues Asn-244 and Asn-281. Residue Cys-438 participates in heme binding.

The protein belongs to the cytochrome P450 family. The cofactor is heme.

The protein resides in the membrane. The catalysed reaction is (-)-longiborneol + reduced [NADPH--hemoprotein reductase] + O2 = culmorin + oxidized [NADPH--hemoprotein reductase] + H2O + H(+). It participates in mycotoxin biosynthesis. In terms of biological role, cytochrome P450 monooxygenase involved in the biosynthesis of culmorin, a tricyclic sesquiterpene diol reported to have antifungal activity and some phytotoxicity to wheat coleoptile tissue, contributing to Fusarium head blight disease. The terpene cyclase CLM1 is responsible for the cyclization of farnesyl diphosphate into the intermediate longiborneol. Longiborneol is then hydroxylated in a regio- and endo-stereoselective manner at position C-11 by the cytochrome P450 monooxygenase CLM2 to produce culmorin. Additional non-specific oxygenases are also able to hydroxylate longiborneol at other sites than C-11 leading to 3-hydroxylongiborneol, 5-hydroxylongiborneol, 12-hydroxylongiborneol and 15-hydroxylongiborneol. Moreover, another oxygenase capable of installing a C-11 exo-hydroxy group in longiborneol can also yield 11-epi-acetylculmorin. The production of these longiborneol derivatives is dwarfed by the high abundance of culmorin, suggesting that CLM2 displays superior enzymatic activity to the unidentified, possibly promiscuous, additional oxygenases. This is Cytochrome P450 monooxygenase CLM2 from Gibberella zeae (strain ATCC MYA-4620 / CBS 123657 / FGSC 9075 / NRRL 31084 / PH-1) (Wheat head blight fungus).